Consider the following 130-residue polypeptide: Small ribosomal subunit protein uS9 (130 aa).

The protein belongs to the universal ribosomal protein uS9 family.

The chain is Small ribosomal subunit protein uS9 from Pseudomonas fluorescens (strain SBW25).